The chain runs to 3010 residues: MSTNPKPQRKTKRNTNRRPQDVKFPGGGQIVGGVYLLPRRGPRLGVRATRKTSERSQPRGRRQPIPKARQPEGRAWAQPGYPWPLYGNEGMGWAGWLLSPRGSRPSWGPTDPRRRSRNLGKVIDTLTCGFADLMGYIPLVGAPLGGVARALAHGVRVVEDGVNYATGNLPGCSFSIFLLALLSCLTIPASAYEVRNVSGIYHVTNDCSNSSIVYEAADMIMHTPGCVPCVREGNSSRCWVALTPTLAARNASVPTTAIRRHVDLLVGAAAFCSAMYVGDLCGSVFLVSQLFTFSPRRHETIQDCNCSIYPGHVSGHRMAWDMMMNWSPTTALVVSQLLRIPQAIVDMVAGAHWGVLAGLAYYSMVGNWAKVLIVMLLFAGVDGETRVTGGQIARNAYSLTTLFSSGSAQNIQLINTNGSWHINRTALNCNDSLNTGFLAALFYTHKFNASGCPERLASCRPIDKFDQGWGPITYAEQGGQDQRPYCWHYAPKPCGIVSASKVCGPVYCFTPSPVVVGTTDRFGVPTYSWGENETDVLLLNNTRPPQGNWFGCTWMNGTGFTKTCGGPPCNIGGGGNNTLTCPTDCFRKHPAATYTKCGSGPWLTPRCLVDYPYRLWHYPCTANFTIFKVRMYVGGVEHRLDAACNWTRGERCNLEDRDRLELSPLLLSTTEWQVLPCSFTTLPALSTGLIHLHQNIVDVQYLYGIGSAVVSFAIKWDYIVILFLLLADARVCACLWMMLLIAQAEAALENLVVLNAASVAGAHGILSFLVFFCAAWYIKGKLVPGAAYAFYGVWPLLLLLLALPPRAYAMEREMAASCGGAVFVGLVLLTLSPYYKEFLARLIWWLQYFITRAEAHLQVWIPPLNIRGGRDAIILLACVVHPELIFDITKLLLAILGPLMVLQASITQVPYFVRAQGLIRACMLVRKVAGGHYVQMAFVKLTALTGTYVYDHLTPLRDWAHAGLRDLAVAVEPVVFSDMETKVITWGADTAACGDIILGLPVSARRGREILLGPADSLEGQGWRLLAPITAYSQQTRGLLGCIITSLTGRDKNQVEGEVQVVSTATQSFLATCVNGACWTVFHGAGSKTLAGPKGPITQMYTNVDLDLVGWQAPPGSRSLTPCTCGSSDLYLVTRHADVIPVRRRGDSRGSLLSPRPVSYLKGSSGGPLLCPSRHAVGIFRAAVCTRGVAKAVDFIPVESMETTMRSPVFTDNSSPPAVPQTFQVAHLHAPTGSGKSTKVPAAYAAQGYKVLVLNPSVAATLGFGAYMSKAHGIDPNIRTGVRAITTGAPITYSTYGKFLADGGCSGGAYDIIICDECHSTDSTTILGIGTVLDQAETAGARLVVLATATPPGSVTVPHPNIEEVALSNAGEIPFYGKAIPIEVIKGGRHLIFCHSKKKYDELAAKLSALGLNAVAYYRGLDVSVIPTNGDVVVVATDALMTGFTGDFDSVIDCNTCVTQTVDFSLDPTFTIETTTVPQDAVARSQRRGRTGRGRRGIYRFVTPGERPSGMFDSSVLCECYDAGCAWYELTPAETSVRLRAYLNTPGLPVCQDHLEFWESVSTGLTHIDAHFLSQTKQAGDNFPYLVAYQATVCARAQAPPPSWDQMWKCLIRLKPTLHGPTPLLYRLGAVQNEITLTHPMTKFIMACMSADLEVVTSTWVLVGGVLAALAAYCLTTGSVVIVGRIILSGRPAVIPDREVLYREFDEMEECASHLPYIEQGMQLAEQFKQKALGLLQTATKQAEAAAPVVESKWRALETFWAKHMWNFISGIQYLAGLSTLPGNPAIASLMAFTASITSPLSTQNTLLFNIWGGWVAAQLAPPSAASAFVGAGIAGAAVGSIGLGKVLVDILAGYGAGVAGALVAFKIMSGEVPSTEDLVNLLPAILSPGALVVGVVCAAILRRHVGPGEGAVQWMNRLIAFASRGNHVSPAHYVPESDAAARVTQILSGLTITQLLKRLHHWINEDCSTPCSGSWLRDVWDWICTVLTDFKTWLQSKLLPRLPGVPFFSCQRGYKGVWRGDGIMQTTCPCGAQITGHVKNGSMRIVGPKTCSSTWHGTFPINAYTTGPCAPSPAPNYSRALWRVAAEEYVEVTRVGDFHYVTGMTTDNVKCPCQVPAPEFFTEVDGVRLHRYAPACKPLLREEVTFQVGLNQYLVGSQLPCEPEPDVAVLTSMLTDPSHITAETAKRRLARGSPPSLASSSASQLSAPSLKATCTTHHDSPDVDLIEANLLWRQEMGGNITRVESENKVVILDSFDPLRAEEDEREPSVAAEILRKTKRFPPAMPIWARPDYNPPLLESWKDPDYVPPVVHGCPLPPTKAPPIPPPRRKRTVVLTESTVSSALAELATKTFGSSGSSAVDSGTATAPPDQASDDGDQGSDVESYSSMPPLEGEPGDPDLSDGSWSTVSEEAGEDVICCSMSYTWTGALITPCAAEESKLPINPLSNSLLRHHNMVYATTSRSAGLRQKKVTFDRLQVLDDHYRDVLKEMKAKASTVKAKLLSIEEACKLTPPHSARSKFGYGAKDVRNLSSKAVNHIRSVWKDLLEDTETPIDTTVMAKSEVFCVQPEKGGRKPARLIVFPDLGVRVCEKMALYDVVSTLPQAVMGSSYGFQYSPGQRVEFLVNAWKSKKCPMGFSYDTRCFDSTVTESDIRVEESIYQCCDLAPEARQAIKSLTERLYIGGPLTNSKGQNCGYRRCRASGVLTTSCGNTLTCYLKASAACRAAKLRDCTMLVNGDDLVVICESAGTQEDEANLRVFTEAMTRYSAPPGDPPRPEYDLELITSCSSNVSVAHDASGKRVYYLTRDPSTPLARAAWETARHTPVNSWLGNIIMYAPTLWARMILMTHFFSILLAQEQLEKALDCQIYGACYSIEPLDLPQIIERLHGLSAFSLHSYSPGEINRVASCLRKLGVPPLRVWRHRARSVRAKLLSQGGRAATCGKYLFNWAVRTKLKLTPIPAASQLDLSSWFVAGYSGGDIYHSLSRARPRWFMLCLLLLSVGVGIYLLPNR.

Position 2 is an N-acetylserine; by host (S2). Residues 2 to 23 are interaction with STAT1; the sequence is STNPKPQRKTKRNTNRRPQDVK. The interaction with EIF2AK2/PKR stretch occupies residues 2 to 58; it reads STNPKPQRKTKRNTNRRPQDVKFPGGGQIVGGVYLLPRRGPRLGVRATRKTSERSQP. Residues 2–59 are interaction with DDX3X; that stretch reads STNPKPQRKTKRNTNRRPQDVKFPGGGQIVGGVYLLPRRGPRLGVRATRKTSERSQPR. The tract at residues 2–75 is disordered; that stretch reads STNPKPQRKT…PKARQPEGRA (74 aa). Residues 2-168 lie on the Cytoplasmic side of the membrane; sequence STNPKPQRKT…EDGVNYATGN (167 aa). 2 consecutive short sequence motifs (nuclear localization signal) follow at residues 5–13 and 38–43; these read PKPQRKTKR and PRRGPR. A compositionally biased stretch (basic residues) spans 7-16; it reads PQRKTKRNTN. Over residues 32 to 47 the composition is skewed to low complexity; the sequence is GGVYLLPRRGPRLGVR. S53 is subject to Phosphoserine; by host. Short sequence motifs (nuclear localization signal) lie at residues 58 to 64 and 66 to 71; these read PRGRRQP and PKARQP. A Phosphoserine; by host modification is found at S99. The interval 112–152 is important for endoplasmic reticulum and mitochondrial localization; the sequence is PRRRSRNLGKVIDTLTCGFADLMGYIPLVGAPLGGVARALA. S116 is subject to Phosphoserine; by host PKA. Residues 122-173 form an interaction with APOA2 region; the sequence is VIDTLTCGFADLMGYIPLVGAPLGGVARALAHGVRVVEDGVNYATGNLPGCS. The interval 164–167 is important for lipid droplets localization; sequence YATG. The helical transmembrane segment at 169-189 threads the bilayer; the sequence is LPGCSFSIFLLALLSCLTIPA. The propeptide at 178-191 is ER anchor for the core protein, removed in mature form by host signal peptidase; the sequence is LLALLSCLTIPASA. Over 190 to 358 the chain is Lumenal; sequence SAYEVRNVSG…AGAHWGVLAG (169 aa). Residues N196, N209, N234, and N250 are each glycosylated (N-linked (GlcNAc...) asparagine; by host). Positions 265–296 are important for fusion; the sequence is LVGAAAFCSAMYVGDLCGSVFLVSQLFTFSPR. An N-linked (GlcNAc...) asparagine; by host glycan is attached at N305. Residues 359-379 form a helical membrane-spanning segment; that stretch reads LAYYSMVGNWAKVLIVMLLFA. Residues 380–725 are Lumenal-facing; the sequence is GVDGETRVTG…WDYIVILFLL (346 aa). The interval 385–411 is HVR1; the sequence is TRVTGGQIARNAYSLTTLFSSGSAQNI. 4 N-linked (GlcNAc...) (high mannose) asparagine; by host glycosylation sites follow: N417, N423, N430, and N448. 4 disulfides stabilise this stretch: C429/C552, C452/C459, C486/C494, and C503/C508. The tract at residues 474-479 is HVR2; the sequence is YAEQGG. The CD81-binding 1 stretch occupies residues 480–493; that stretch reads QDQRPYCWHYAPKP. N-linked (GlcNAc...) (high mannose) asparagine; by host glycosylation is present at N532. A glycan (N-linked (GlcNAc...) asparagine; by host) is linked at N540. The segment at 544–551 is CD81-binding 2; it reads PPQGNWFG. A glycan (N-linked (GlcNAc...) (high mannose) asparagine; by host) is linked at N556. C564 and C569 form a disulfide bridge. A glycan (N-linked (GlcNAc...) (high mannose) asparagine; by host) is linked at N576. Intrachain disulfides connect C581-C585, C597-C620, and C607-C644. N-linked (GlcNAc...) (high mannose) asparagine; by host glycans are attached at residues N623 and N645. C652 and C677 are oxidised to a cystine. Positions 660 to 671 are PKR/eIF2-alpha phosphorylation homology domain (PePHD); that stretch reads LELSPLLLSTTE. Residues 726 to 746 traverse the membrane as a helical segment; the sequence is LADARVCACLWMMLLIAQAEA. At 747-757 the chain is on the lumenal side; that stretch reads ALENLVVLNAA. The helical transmembrane segment at 758–778 threads the bilayer; sequence SVAGAHGILSFLVFFCAAWYI. Over 779–781 the chain is Cytoplasmic; it reads KGK. A helical membrane pass occupies residues 782–803; the sequence is LVPGAAYAFYGVWPLLLLLLAL. At 804 to 813 the chain is on the lumenal side; the sequence is PPRAYAMERE. The helical transmembrane segment at 814–834 threads the bilayer; the sequence is MAASCGGAVFVGLVLLTLSPY. The Cytoplasmic segment spans residues 835–838; that stretch reads YKEF. A helical transmembrane segment spans residues 839–859; it reads LARLIWWLQYFITRAEAHLQV. At 860–881 the chain is on the lumenal side; the sequence is WIPPLNIRGGRDAIILLACVVH. A helical transmembrane segment spans residues 882-902; the sequence is PELIFDITKLLLAILGPLMVL. Residues 903-1026 form the Peptidase C18 domain; sequence QASITQVPYF…SLEGQGWRLL (124 aa). Topologically, residues 903–1657 are cytoplasmic; that stretch reads QASITQVPYF…CMSADLEVVT (755 aa). The segment at 904–1206 is protease NS2-3; it reads ASITQVPYFV…PVESMETTMR (303 aa). C922 carries S-palmitoyl cysteine; by host lipidation. The interval 929 to 949 is interaction with host SCPS1; sequence AGGHYVQMAFVKLTALTGTYV. Active-site for protease NS2 activity; shared with dimeric partner residues include H952, E972, and C993. The Peptidase S29 domain occupies 1027 to 1208; that stretch reads APITAYSQQT…ESMETTMRSP (182 aa). Active-site charge relay system; for serine protease NS3 activity residues include H1083 and D1107. Residues C1123 and C1125 each contribute to the Zn(2+) site. The active-site Charge relay system; for serine protease NS3 activity is S1165. Zn(2+) is bound by residues C1171 and H1175. Positions 1217–1369 constitute a Helicase ATP-binding domain; the sequence is PAVPQTFQVA…PNIEEVALSN (153 aa). Position 1230-1237 (1230-1237) interacts with ATP; the sequence is APTGSGKS. Residues S1237 and E1317 each contribute to the Mg(2+) site. The DECH box motif lies at 1316-1319; it reads DECH. Residues 1486–1497 are RNA-binding; it reads QRRGRTGRGRRG. A helical membrane pass occupies residues 1658–1678; the sequence is STWVLVGGVLAALAAYCLTTG. The tract at residues 1679–1690 is NS3-binding; it reads SVVIVGRIILSG. The Cytoplasmic portion of the chain corresponds to 1679 to 1805; sequence SVVIVGRIIL…SITSPLSTQN (127 aa). A helical transmembrane segment spans residues 1806–1824; it reads TLLFNIWGGWVAAQLAPPS. At 1825-1828 the chain is on the lumenal side; it reads AASA. The chain crosses the membrane as a helical span at residues 1829–1849; that stretch reads FVGAGIAGAAVGSIGLGKVLV. Position 1850 (D1850) is a topological domain, cytoplasmic. A helical membrane pass occupies residues 1851-1871; that stretch reads ILAGYGAGVAGALVAFKIMSG. Residues 1872–1881 lie on the Lumenal side of the membrane; the sequence is EVPSTEDLVN. Residues 1882–1902 form a helical membrane-spanning segment; the sequence is LLPAILSPGALVVGVVCAAIL. Residues 1903-1972 are Cytoplasmic-facing; it reads RRHVGPGEGA…WINEDCSTPC (70 aa). 2 S-palmitoyl cysteine; by host lipidation sites follow: C1968 and C1972. The stretch at 1973-2002 is an intramembrane region; sequence SGSWLRDVWDWICTVLTDFKTWLQSKLLPR. Topologically, residues 2003–2989 are cytoplasmic; that stretch reads LPGVPFFSCQ…YHSLSRARPR (987 aa). 4 residues coordinate Zn(2+): C2011, C2029, C2031, and C2052. An FKBP8-binding region spans residues 2120 to 2208; it reads EFFTEVDGVR…ASSSASQLSA (89 aa). The interval 2120–2332 is transcriptional activation; sequence EFFTEVDGVR…PIPPPRRKRT (213 aa). Residues 2135–2139 form an interaction with non-structural protein 4A region; it reads PACKP. The tract at residues 2189-2441 is interaction with host SKP2; it reads RLARGSPPSL…PCAAEESKLP (253 aa). S2194 carries the phosphoserine; by host; in p56 modification. Phosphoserine; by host; in p58 is present on residues S2197, S2201, S2204, S2207, and S2210. Residues 2210–2249 are ISDR; it reads SLKATCTTHHDSPDVDLIEANLLWRQEMGGNITRVESENK. Positions 2210 to 2275 are interaction with EIF2AK2/PKR; it reads SLKATCTTHH…REPSVAAEIL (66 aa). Residues 2249–2306 are NS4B-binding; it reads KVVILDSFDPLRAEEDEREPSVAAEILRKTKRFPPAMPIWARPDYNPPLLESWKDPDY. Residues 2322–2325 carry the SH3-binding motif; sequence PPIP. The Nuclear localization signal signature appears at 2326-2334; the sequence is PPRRKRTVV. K2350 participates in a covalent cross-link: Glycyl lysine isopeptide (Lys-Gly) (interchain with G-Cter in ubiquitin). Residues 2351–2365 show a composition bias toward polar residues; that stretch reads TFGSSGSSAVDSGTA. Residues 2351-2407 are disordered; that stretch reads TFGSSGSSAVDSGTATAPPDQASDDGDQGSDVESYSSMPPLEGEPGDPDLSDGSWST. Residues 2354 to 2377 form a V3 region; sequence SSGSSAVDSGTATAPPDQASDDGD. Phosphoserine; by host is present on residues S2448 and S2461. Residues 2633 to 2751 enclose the RdRp catalytic domain; sequence PMGFSYDTRC…ICESAGTQED (119 aa). The Mg(2+) site is built by D2639, D2737, and D2738. Residues 2990–3010 form a helical membrane-spanning segment; that stretch reads WFMLCLLLLSVGVGIYLLPNR.

The protein belongs to the hepacivirus polyprotein family. As to quaternary structure, homooligomer. Interacts with E1 (via C-terminus). Interacts with the non-structural protein 5A. Interacts (via N-terminus) with host STAT1 (via SH2 domain); this interaction results in decreased STAT1 phosphorylation and ubiquitin-mediated proteasome-dependent STAT1 degradation, leading to decreased IFN-stimulated gene transcription. Interacts with host STAT3; this interaction constitutively activates STAT3. Interacts with host LTBR receptor. Interacts with host TNFRSF1A receptor and possibly induces apoptosis. Interacts with host HNRPK. Interacts with host YWHAE. Interacts with host UBE3A/E6AP. Interacts with host DDX3X. Interacts with host APOA2. Interacts with host RXRA protein. Interacts with host SP110 isoform 3/Sp110b; this interaction sequesters the transcriptional corepressor SP110 away from the nucleus. Interacts with host CREB3 nuclear transcription protein; this interaction triggers cell transformation. Interacts with host ACY3. Interacts with host C1QR1. Interacts with host RBM24; this interaction, which enhances the interaction of the mature core protein with 5'-UTR, may inhibit viral translation and favor replication. Interacts with host EIF2AK2/PKR; this interaction induces the autophosphorylation of EIF2AK2. Part of the viral assembly initiation complex composed of NS2, E1, E2, NS3, NS4A, NS5A and the mature core protein. Forms a heterodimer with envelope glycoprotein E2. Interacts with mature core protein. Interacts with protease NS2. The heterodimer E1/E2 interacts with host CLDN1; this interaction plays a role in viral entry into host cell. Interacts with host SPSB2 (via C-terminus). Part of the viral assembly initiation complex composed of NS2, E1, E2, NS3, NS4A, NS5A and the mature core protein. Interacts with host NEURL3; this interaction prevents E1 binding to glycoprotein E2. In terms of assembly, forms a heterodimer with envelope glycoprotein E1. Interacts with host CD81 and SCARB1 receptors; these interactions play a role in viral entry into host cell. Interacts with host EIF2AK2/PKR; this interaction inhibits EIF2AK2 and probably allows the virus to evade the innate immune response. Interacts with host CD209/DC-SIGN and CLEC4M/DC-SIGNR. Interact with host SPCS1; this interaction is essential for viral particle assembly. Interacts with protease NS2. The heterodimer E1/E2 interacts with host CLDN1; this interaction plays a role in viral entry into host cell. Part of the viral assembly initiation complex composed of NS2, E1, E2, NS3, NS4A, NS5A and the mature core protein. Interacts with host SLC3A2/4F2hc; the interaction may facilitate viral entry into host cell. Interacts with human PLSCR1. As to quaternary structure, homohexamer. Homoheptamer. Interacts with protease NS2. Homodimer. Interacts with host SPCS1; this interaction is essential for viral particle assembly. Interacts with envelope glycoprotein E1. Interacts with envelope glycoprotein E2. Interacts with viroporin p7. Interacts with serine protease/helicase NS3. Part of the replication complex composed of NS2, NS3, NS4A, NS4B, NS5A and the RNA-directed RNA polymerase embedded in an ER-derived membranous web. Part of the viral assembly initiation complex composed of NS2, E1, E2, NS3, NS4A, NS5A and the mature core protein. In terms of assembly, interacts with protease NS2. Interacts with non-structural protein 4A; this interaction stabilizes the folding of NS3 serine protease. NS3-NS4A interaction is essential for NS3 activation and allows membrane anchorage of the latter. NS3/NS4A complex also prevents phosphorylation of host IRF3, thus preventing the establishment of dsRNA induced antiviral state. Interacts with host MAVS; this interaction leads to the cleavage and inhibition of host MAVS. Interacts with host TICAM1; this interaction leads to the cleavage and inhibition of host TICAM1. Interacts with host TANK-binding kinase/TBK1; this interaction results in the inhibition of the association between TBK1 and IRF3, which leads to the inhibition of IRF3 activation. Interacts with host RBM24. Part of the replication complex composed of NS2, NS3, NS4A, NS4B, NS5A and the RNA-directed RNA polymerase embedded in an ER-derived membranous web. Part of the viral assembly initiation complex composed of NS2, E1, E2, NS3, NS4A, NS5A and the mature core protein. As to quaternary structure, interacts with NS3 serine protease; this interaction stabilizes the folding of NS3 serine protease. NS3-NS4A interaction is essential for NS3 activation and allows membrane anchorage of the latter. Interacts with non-structural protein 5A (via N-terminus). Part of the replication complex composed of NS2, NS3, NS4A, NS4B, NS5A and the RNA-directed RNA polymerase embedded in an ER-derived membranous web. Part of the viral assembly initiation complex composed of NS2, E1, E2, NS3, NS4A, NS5A and the mature core protein. Homomultimer. Interacts with non-structural protein NS5A. Interacts with host PLA2G4C; this interaction likely initiates the recruitment of replication complexes to lipid droplets. Interacts with host STING; this interaction disrupts the interaction between STING and TBK1 thereby suppressing the interferon signaling. Part of the replication complex composed of NS2, NS3, NS4A, NS4B, NS5A and the RNA-directed RNA polymerase embedded in an ER-derived membranous web. In terms of assembly, monomer. Homodimer; dimerization is required for RNA-binding. Interacts with the mature core protein. Interacts (via N-terminus) with non-structural protein 4A. Interacts with non-structural protein 4B. Interacts (via region D2) with RNA-directed RNA polymerase. Part of the viral assembly initiation complex composed of NS2, E1, E2, NS3, NS4A, NS5A and the mature core protein. Part of the replication complex composed of NS2, NS3, NS4A, NS4B, NS5A and the RNA-directed RNA polymerase embedded in an ER-derived membranous web. Interacts with host GRB2. Interacts with host BIN1. Interacts with host PIK3R1. Interacts with host SRCAP. Interacts with host FKBP8. Interacts (via C-terminus) with host VAPB (via MSP domain). Interacts with host EIF2AK2/PKR; this interaction leads to disruption of EIF2AK2 dimerization by NS5A and probably allows the virus to evade the innate immune response. Interacts (via N-terminus) with host PACSIN2 (via N-terminus); this interaction attenuates protein kinase C alpha-mediated phosphorylation of PACSIN2 by disrupting the interaction between PACSIN2 and PRKCA. Interacts (via N-terminus) with host SRC kinase (via SH2 domain). Interacts with most Src-family kinases. Interacts with host IFI27 and SKP2; promotes the ubiquitin-mediated proteasomal degradation of NS5A. Interacts with host GPS2. Interacts with host TNFRSF21; this interaction allows the modulation by the virus of JNK, p38 MAPK, STAT3, and Akt signaling pathways in a DR6-dependent manner. Interacts (via N-terminus) with host CIDEB (via N-terminus); this interaction seems to regulate the association of HCV particles with APOE. Interacts with host CHKA/Choline Kinase-alpha; CHKA bridges host PI4KA and NS5A and potentiates NS5A-stimulated PI4KA activity, which then facilitates the targeting of the ternary complex to the ER for viral replication. Interacts with host SPSB2 (via C-terminus); this interaction targets NS5A for ubiquitination and degradation. Interacts with host RAB18; this interaction may promote the association of NS5A and other replicase components with lipid droplets. Interacts (via region D2) with host PPIA/CYPA; the interaction stimulates RNA-binding ability of NS5A and is dependent on the peptidyl-prolyl cis-trans isomerase activity of PPIA/CYPA. Interacts with host TRIM14; this interaction induces the degradation of NS5A. As to quaternary structure, homooligomer. Interacts with non-structural protein 5A. Interacts with host VAPB. Interacts with host PRK2/PKN2. Interacts with host HNRNPA1 and SEPT6; these interactions facilitate viral replication. Part of the replication complex composed of NS2, NS3, NS4A, NS4B, NS5A and the RNA-directed RNA polymerase. Zn(2+) serves as cofactor. The cofactor is Mg(2+). Post-translationally, specific enzymatic cleavages in vivo yield mature proteins. The structural proteins, core, E1, E2 and p7 are produced by proteolytic processing by host signal peptidases. The core protein precursor is synthesized as a 23 kDa, which is retained in the ER membrane through the hydrophobic signal peptide. Cleavage by the signal peptidase releases the 21 kDa mature core protein. The cleavage of the core protein precursor occurs between aminoacids 176 and 188 but the exact cleavage site is not known. Some degraded forms of the core protein appear as well during the course of infection. The other proteins (p7, NS2, NS3, NS4A, NS4B, NS5A and NS5B) are cleaved by the viral proteases. Autoprocessing between NS2 and NS3 is mediated by the NS2 cysteine protease catalytic domain and regulated by the NS3 N-terminal domain. In terms of processing, phosphorylated by host PKC and PKA. Ubiquitinated; mediated by UBE3A and leading to core protein subsequent proteasomal degradation. Post-translationally, highly N-glycosylated. In terms of processing, palmitoylation is required for NS2/3 autoprocessing and E2 recruitment to membranes. Palmitoylated. This modification may play a role in its polymerization or in protein-protein interactions. Post-translationally, phosphorylated on serines in a basal form termed p56. p58 is a hyperphosphorylated form of p56. p56 and p58 coexist in the cell in roughly equivalent amounts. Hyperphosphorylation is dependent on the presence of NS4A. Host CSNK1A1/CKI-alpha or RPS6KB1 kinases may be responsible for NS5A phosphorylation. In terms of processing, tyrosine phosphorylation is essential for the interaction with host SRC. Ubiquitinated. Ubiquitination, most probably at Lys-2350, mediated by host IFI27 and SKP2 leads to proteasomal degradation, restricting viral infection. Ubiquitination by host TRIM22 leads to interruption of viral replication. Post-translationally, the N-terminus is phosphorylated by host PRK2/PKN2.

It is found in the host endoplasmic reticulum membrane. It localises to the host mitochondrion membrane. The protein localises to the virion. The protein resides in the host cytoplasm. Its subcellular location is the host nucleus. It is found in the host lipid droplet. It localises to the virion membrane. The protein localises to the host mitochondrion. The protein resides in the host cell membrane. Its subcellular location is the host perinuclear region. The catalysed reaction is Hydrolysis of four peptide bonds in the viral precursor polyprotein, commonly with Asp or Glu in the P6 position, Cys or Thr in P1 and Ser or Ala in P1'.. The enzyme catalyses a ribonucleoside 5'-triphosphate + H2O = a ribonucleoside 5'-diphosphate + phosphate + H(+). It catalyses the reaction ATP + H2O = ADP + phosphate + H(+). It carries out the reaction RNA(n) + a ribonucleoside 5'-triphosphate = RNA(n+1) + diphosphate. Its activity is regulated as follows. Inhibited by the antiviral drug hexamethylene amiloride. Inhibition by amantadine appears to be genotype-dependent. Also inhibited by long-alkyl-chain iminosugar derivatives. Activity is up-regulated by PRK2/PKN2-mediated phosphorylation. Its function is as follows. Packages viral RNA to form a viral nucleocapsid, and promotes virion budding. Participates in the viral particle production as a result of its interaction with the non-structural protein 5A. Binds RNA and may function as a RNA chaperone to induce the RNA structural rearrangements taking place during virus replication. Modulates viral translation initiation by interacting with viral IRES and 40S ribosomal subunit. Affects various cell signaling pathways, host immunity and lipid metabolism. Prevents the establishment of cellular antiviral state by blocking the interferon-alpha/beta (IFN-alpha/beta) and IFN-gamma signaling pathways and by blocking the formation of phosphorylated STAT1 and promoting ubiquitin-mediated proteasome-dependent degradation of STAT1. Activates STAT3 leading to cellular transformation. Regulates the activity of cellular genes, including c-myc and c-fos. May repress the promoter of p53, and sequester CREB3 and SP110 isoform 3/Sp110b in the cytoplasm. Represses cell cycle negative regulating factor CDKN1A, thereby interrupting an important check point of normal cell cycle regulation. Targets transcription factors involved in the regulation of inflammatory responses and in the immune response: suppresses TNF-induced NF-kappa-B activation, and activates AP-1. Binds to dendritic cells (DCs) via C1QR1, resulting in down-regulation of T-lymphocytes proliferation. Alters lipid metabolism by interacting with hepatocellular proteins involved in lipid accumulation and storage. Induces up-regulation of FAS promoter activity, and thereby contributes to the increased triglyceride accumulation in hepatocytes (steatosis). Functionally, forms a heterodimer with envelope glycoprotein E2, which mediates virus attachment to the host cell, virion internalization through clathrin-dependent endocytosis and fusion with host membrane. Fusion with the host cell is most likely mediated by both E1 and E2, through conformational rearrangements of the heterodimer required for fusion rather than a classical class II fusion mechanism. E1/E2 heterodimer binds host apolipoproteins such as APOB and APOE thereby forming a lipo-viro-particle (LVP). APOE associated to the LVP allows the initial virus attachment to cell surface receptors such as the heparan sulfate proteoglycans (HSPGs), syndecan-1 (SDC1), syndecan-1 (SDC2), the low-density lipoprotein receptor (LDLR) and scavenger receptor class B type I (SCARB1). The cholesterol transfer activity of SCARB1 allows E2 exposure and binding of E2 to SCARB1 and the tetraspanin CD81. E1/E2 heterodimer binding on CD81 activates the epithelial growth factor receptor (EGFR) signaling pathway. Diffusion of the complex E1-E2-EGFR-SCARB1-CD81 to the cell lateral membrane allows further interaction with Claudin 1 (CLDN1) and occludin (OCLN) to finally trigger HCV entry. Forms a heterodimer with envelope glycoprotein E1, which mediates virus attachment to the host cell, virion internalization through clathrin-dependent endocytosis and fusion with host membrane. Fusion with the host cell is most likely mediated by both E1 and E2, through conformational rearrangements of the heterodimer required for fusion rather than a classical class II fusion mechanism. The interaction between envelope glycoprotein E2 and host apolipoprotein E/APOE allows the proper assembly, maturation and infectivity of the viral particles. This interaction is probably promoted via the up-regulation of cellular autophagy by the virus. E1/E2 heterodimer binds host apolipoproteins such as APOB and APOE thereby forming a lipo-viro-particle (LVP). APOE associated to the LVP allows the initial virus attachment to cell surface receptors such as the heparan sulfate proteoglycans (HSPGs), syndecan-1 (SDC1), syndecan-1 (SDC2), the low-density lipoprotein receptor (LDLR) and scavenger receptor class B type I (SCARB1). The cholesterol transfer activity of SCARB1 allows E2 exposure and binding of E2 to SCARB1 and the tetraspanin CD81. E1/E2 heterodimer binding on CD81 activates the epithelial growth factor receptor (EGFR) signaling pathway. Diffusion of the complex E1-E2-EGFR-SCARB1-CD81 to the cell lateral membrane allows further interaction with Claudin 1 (CLDN1) and occludin (OCLN) to finally trigger HCV entry. Inhibits host EIF2AK2/PKR activation, preventing the establishment of an antiviral state. Viral ligand for CD209/DC-SIGN and CLEC4M/DC-SIGNR, which are respectively found on dendritic cells (DCs), and on liver sinusoidal endothelial cells and macrophage-like cells of lymph node sinuses. These interactions allow the capture of circulating HCV particles by these cells and subsequent facilitated transmission to permissive cells such as hepatocytes and lymphocyte subpopulations. The interaction between E2 and host amino acid transporter complex formed by SLC3A2 and SLC7A5/LAT1 may facilitate viral entry into host cell. In terms of biological role, ion channel protein that acts as a viroporin and plays an essential role in the assembly, envelopment and secretion of viral particles. Regulates the host cell secretory pathway, which induces the intracellular retention of viral glycoproteins and favors assembly of viral particles. Creates a pore in acidic organelles and releases Ca(2+) and H(+) in the cytoplasm of infected cells, leading to a productive viral infection. High levels of cytoplasmic Ca(2+) may trigger membrane trafficking and transport of viral ER-associated proteins to viroplasms, sites of viral genome replication. This ionic imbalance induces the assembly of the inflammasome complex, which triggers the maturation of pro-IL-1beta into IL-1beta through the action of caspase-1. Targets also host mitochondria and induces mitochondrial depolarization. In addition of its role as a viroporin, acts as a lipid raft adhesion factor. Its function is as follows. Cysteine protease required for the proteolytic auto-cleavage between the non-structural proteins NS2 and NS3. The N-terminus of NS3 is required for the function of NS2 protease (active region NS2-3). Promotes the initiation of viral particle assembly by mediating the interaction between structural and non-structural proteins. Functionally, displays three enzymatic activities: serine protease with a chymotrypsin-like fold, NTPase and RNA helicase. NS3 serine protease, in association with NS4A, is responsible for the cleavages of NS3-NS4A, NS4A-NS4B, NS4B-NS5A and NS5A-NS5B. The NS3/NS4A complex prevents phosphorylation of host IRF3, thus preventing the establishment of dsRNA induced antiviral state. The NS3/NS4A complex induces host amino acid transporter component SLC3A2, thus contributing to HCV propagation. NS3 RNA helicase binds to RNA and unwinds both dsDNA and dsRNA in the 3' to 5' direction, and likely resolves RNA complicated stable secondary structures in the template strand. Binds a single ATP and catalyzes the unzipping of a single base pair of dsRNA. Inhibits host antiviral proteins TBK1 and IRF3 thereby preventing the establishment of an antiviral state. Cleaves host MAVS/CARDIF thereby preventing the establishment of an antiviral state. Cleaves host TICAM1/TRIF, thereby disrupting TLR3 signaling and preventing the establishment of an antiviral state. Peptide cofactor which forms a non-covalent complex with the N-terminal of NS3 serine protease. The NS3/NS4A complex prevents phosphorylation of host IRF3, thus preventing the establishment of dsRNA induced antiviral state. The NS3/NS4A complex induces host amino acid transporter component SLC3A2, thus contributing to HCV propagation. In terms of biological role, induces a specific membrane alteration that serves as a scaffold for the virus replication complex. This membrane alteration gives rise to the so-called ER-derived membranous web that contains the replication complex. NS4B self-interaction contributes to its function in membranous web formation. Promotes host TRIF protein degradation in a CASP8-dependent manner thereby inhibiting host TLR3-mediated interferon signaling. Disrupts the interaction between STING and TBK1 contributing to the inhibition of interferon signaling. Its function is as follows. Phosphorylated protein that is indispensable for viral replication and assembly. Both hypo- and hyperphosphorylated states are required for the viral life cycle. The hyperphosphorylated form of NS5A is an inhibitor of viral replication. Involved in RNA-binding and especially in binding to the viral genome. Zinc is essential for RNA-binding. Participates in the viral particle production as a result of its interaction with the mature viral core protein. Its interaction with host VAPB may target the viral replication complex to vesicles. Down-regulates viral IRES translation initiation. Mediates interferon resistance, presumably by interacting with and inhibiting host EIF2AK2/PKR. Prevents BIN1-induced apoptosis. Acts as a transcriptional activator of some host genes important for viral replication when localized in the nucleus. Via the interaction with host PACSIN2, modulates lipid droplet formation in order to promote virion assembly. Modulates TNFRSF21/DR6 signaling pathway for viral propagation. Functionally, RNA-dependent RNA polymerase that performs primer-template recognition and RNA synthesis during viral replication. Initiates RNA transcription/replication at a flavin adenine dinucleotide (FAD), resulting in a 5'- FAD cap on viral RNAs. In this way, recognition of viral 5' RNA by host pattern recognition receptors can be bypassed, thereby evading activation of antiviral pathways. This Homo sapiens (Human) protein is Genome polyprotein.